The chain runs to 87 residues: Small ribosomal subunit protein bS20 (87 aa).

The tract at residues 67-87 (HKNNGSRKASRLDAYVQSKQQ) is disordered.

This sequence belongs to the bacterial ribosomal protein bS20 family.

In terms of biological role, binds directly to 16S ribosomal RNA. The protein is Small ribosomal subunit protein bS20 of Metamycoplasma arthritidis (strain 158L3-1) (Mycoplasma arthritidis).